The following is a 397-amino-acid chain: Acetate kinase (397 aa).

Asparagine 8 contributes to the Mg(2+) binding site. Lysine 15 lines the ATP pocket. Substrate is bound at residue arginine 92. Aspartate 149 acts as the Proton donor/acceptor in catalysis. ATP-binding positions include histidine 209–glycine 213, aspartate 283–arginine 285, and glycine 331–asparagine 335. Glutamate 385 is a binding site for Mg(2+).

The protein belongs to the acetokinase family. In terms of assembly, homodimer. Requires Mg(2+) as cofactor. The cofactor is Mn(2+).

The protein resides in the cytoplasm. It carries out the reaction acetate + ATP = acetyl phosphate + ADP. It participates in metabolic intermediate biosynthesis; acetyl-CoA biosynthesis; acetyl-CoA from acetate: step 1/2. Catalyzes the formation of acetyl phosphate from acetate and ATP. Can also catalyze the reverse reaction. This is Acetate kinase from Corynebacterium glutamicum (strain R).